A 63-amino-acid chain; its full sequence is Large ribosomal subunit protein bL35 (63 aa).

It belongs to the bacterial ribosomal protein bL35 family.

This chain is Large ribosomal subunit protein bL35, found in Campylobacter fetus subsp. fetus (strain 82-40).